A 159-amino-acid polypeptide reads, in one-letter code: Transmembrane protein 42 (159 aa).

4 consecutive transmembrane segments (helical) span residues 37–57 (FWGVFNCLCAGSFGALAAASA), 59–79 (LAFGSEVSMGLCVLGIIVMAS), 100–120 (IASVTVTFSNILSSAFLGYVL), and 124–144 (CQEVLWWGGVFLILCGLTLIH).

The protein localises to the membrane. The sequence is that of Transmembrane protein 42 (TMEM42) from Pongo abelii (Sumatran orangutan).